The following is a 290-amino-acid chain: Probable lipid hydrolase 463L (290 aa).

Transmembrane regions (helical) follow at residues 26–46 (TLVL…LNGL) and 53–73 (ISTF…SIGY). In terms of domain architecture, PNPLA spans 27-207 (LVLSGGAMRG…WNNFPIDIAI (181 aa)). The short motif at 58 to 62 (GISSG) is the GXSXG element. Ser60 (nucleophile) is an active-site residue. Residue Asp194 is the Proton acceptor of the active site. The DGA/G motif lies at 194–196 (DGG).

It localises to the membrane. Its function is as follows. Probable lipid hydrolase. In Invertebrate iridescent virus 6 (IIV-6), this protein is Probable lipid hydrolase 463L.